Here is a 400-residue protein sequence, read N- to C-terminus: Bifunctional enzyme IspD/IspF (400 aa).

The tract at residues 1–235 (MSLWTVLLAA…LAEAAAPPVP (235 aa)) is 2-C-methyl-D-erythritol 4-phosphate cytidylyltransferase. Residues 236-400 (VTGYGYDVHR…VALVSGWRRP (165 aa)) form a 2-C-methyl-D-erythritol 2,4-cyclodiphosphate synthase region. A divalent metal cation contacts are provided by aspartate 242 and histidine 244. 4-CDP-2-C-methyl-D-erythritol 2-phosphate-binding positions include 242 to 244 (DVH) and 276 to 277 (HS). Residue histidine 284 coordinates a divalent metal cation. 4-CDP-2-C-methyl-D-erythritol 2-phosphate-binding positions include 298–300 (DIG), 303–307 (FPDSN), 374–377 (TTEE), and phenylalanine 381.

It in the N-terminal section; belongs to the IspD/TarI cytidylyltransferase family. IspD subfamily. This sequence in the C-terminal section; belongs to the IspF family. A divalent metal cation serves as cofactor.

It catalyses the reaction 2-C-methyl-D-erythritol 4-phosphate + CTP + H(+) = 4-CDP-2-C-methyl-D-erythritol + diphosphate. The catalysed reaction is 4-CDP-2-C-methyl-D-erythritol 2-phosphate = 2-C-methyl-D-erythritol 2,4-cyclic diphosphate + CMP. The protein operates within isoprenoid biosynthesis; isopentenyl diphosphate biosynthesis via DXP pathway; isopentenyl diphosphate from 1-deoxy-D-xylulose 5-phosphate: step 2/6. It participates in isoprenoid biosynthesis; isopentenyl diphosphate biosynthesis via DXP pathway; isopentenyl diphosphate from 1-deoxy-D-xylulose 5-phosphate: step 4/6. Bifunctional enzyme that catalyzes the formation of 4-diphosphocytidyl-2-C-methyl-D-erythritol from CTP and 2-C-methyl-D-erythritol 4-phosphate (MEP) (IspD), and catalyzes the conversion of 4-diphosphocytidyl-2-C-methyl-D-erythritol 2-phosphate (CDP-ME2P) to 2-C-methyl-D-erythritol 2,4-cyclodiphosphate (ME-CPP) with a corresponding release of cytidine 5-monophosphate (CMP) (IspF). The chain is Bifunctional enzyme IspD/IspF from Solidesulfovibrio magneticus (strain ATCC 700980 / DSM 13731 / RS-1) (Desulfovibrio magneticus).